Reading from the N-terminus, the 396-residue chain is Purine ribonucleoside efflux pump NepI (396 aa).

Over Met-1 to Ala-21 the chain is Cytoplasmic. The helical transmembrane segment at Val-22 to Leu-42 threads the bilayer. Topologically, residues Leu-43 to Glu-54 are periplasmic. Residues Gly-55–Ile-75 form a helical membrane-spanning segment. Topologically, residues Thr-76 to Arg-85 are cytoplasmic. A helical transmembrane segment spans residues Tyr-86–Asn-106. Ser-107 is a topological domain (periplasmic). A helical membrane pass occupies residues Phe-108 to Met-128. The Cytoplasmic segment spans residues Ser-129 to Ser-147. Residues Val-148–Gly-168 traverse the membrane as a helical segment. The Periplasmic segment spans residues Glu-169 to Asn-175. Residues Val-176–Pro-196 form a helical membrane-spanning segment. Topologically, residues Ser-197–Arg-215 are cytoplasmic. The chain crosses the membrane as a helical span at residues Pro-216–Phe-236. Residues Thr-237 to Thr-255 lie on the Periplasmic side of the membrane. A helical membrane pass occupies residues Leu-256–Leu-276. Topologically, residues Lys-277 to Lys-281 are cytoplasmic. A helical membrane pass occupies residues Leu-282–Gly-302. At Ser-303–Lys-305 the chain is on the periplasmic side. Residues Ile-306–Trp-326 traverse the membrane as a helical segment. Residues Ser-327 to Ser-343 are Cytoplasmic-facing. The helical transmembrane segment at Ile-344 to Leu-364 threads the bilayer. The Periplasmic segment spans residues Asp-365–Asn-366. The chain crosses the membrane as a helical span at residues Ile-367 to Val-387. At Thr-388–Ser-396 the chain is on the cytoplasmic side.

The protein belongs to the major facilitator superfamily. DHA1 family. NepI (TC 2.A.1.2.26) subfamily.

The protein localises to the cell inner membrane. It carries out the reaction inosine(in) + H(+)(out) = inosine(out) + H(+)(in). The enzyme catalyses guanosine(in) + H(+)(out) = guanosine(out) + H(+)(in). Involved in the efflux of purine ribonucleosides, such as inosine and guanosine. The protein is Purine ribonucleoside efflux pump NepI of Escherichia coli O157:H7.